The primary structure comprises 334 residues: Chemotactic signal transduction system substrate-binding protein CosB (334 aa).

The N-terminal stretch at 1 to 29 (MMDTPEHASTSSRRQLLGMLAAGGTTAVA) is a signal peptide.

The protein belongs to the OsmX family.

The protein resides in the cell membrane. Functionally, mediates chemotaxis towards compatible osmolytes. May function as a receptor that binds the osmolytes and transduces a signal to CosT. Has probably no additional role in transport. The chain is Chemotactic signal transduction system substrate-binding protein CosB (cosB) from Halobacterium salinarum (strain ATCC 29341 / DSM 671 / R1).